The chain runs to 431 residues: Fumarylacetoacetase fahA (431 aa).

A Ca(2+)-binding site is contributed by aspartate 133. Residue tyrosine 135 participates in substrate binding. Histidine 140 functions as the Proton acceptor in the catalytic mechanism. Position 149 (arginine 149) interacts with substrate. Residues glutamate 209, glutamate 211, and aspartate 243 each contribute to the Ca(2+) site. Aspartate 243 serves as a coordination point for Mg(2+). Positions 250 and 254 each coordinate substrate. The Mg(2+) site is built by lysine 263 and threonine 267. Substrate is bound at residue threonine 362. The segment covering 362–381 has biased composition (polar residues); sequence TISGKENQTQGSLLEQTNGK. The disordered stretch occupies residues 362–382; the sequence is TISGKENQTQGSLLEQTNGKN.

The protein belongs to the FAH family. Ca(2+) is required as a cofactor. It depends on Mg(2+) as a cofactor.

It catalyses the reaction 4-fumarylacetoacetate + H2O = acetoacetate + fumarate + H(+). The protein operates within amino-acid degradation; L-phenylalanine degradation; acetoacetate and fumarate from L-phenylalanine: step 6/6. In terms of biological role, fumarylacetoacetase; part of the L-tyrosine degradation gene cluster that mediates the biosynthesis of the brownish pigment pyomelanin as an alternative melanin. The 4-hydroxyphenylpyruvate dioxygenase hppD catalyzes the conversion of 4-hydroxyphenylpyruvate to homogentisic acid (HGA). The protein hmgX is crucial for this conversion and thus, probably functions as an accessory factor to mediate specific activity of hppD. The homogentisate 1,2-dioxygenase hmgA is then involved in the cleavage of the aromatic ring of HGA and its conversion to 4-maleylacetoacetate. When hmgA activity is lowered by the cell wall integrity (CWI) signaling pathway, HGA accumulates and leads to the production of pyomelanin through benzoquinone acetic acid after oxidation and polymerization. On the opposite, in non-stress conditions, both hppD and hmgA activities are balanced and HGA is degraded into 4-maleylacetoacetate. 4-maleylacetoacetate is further converted to 4-fumarylacetoacetate by the maleylacetoacetate isomerase maiA, which is degraded into fumarate and acetoacetate by the fumarylacetoacetase fahA. The chain is Fumarylacetoacetase fahA from Aspergillus fumigatus (strain ATCC MYA-4609 / CBS 101355 / FGSC A1100 / Af293) (Neosartorya fumigata).